A 312-amino-acid chain; its full sequence is MAEALPEAGRYFCHSCTAEITPRLPEYTCPRCDSGFIEELPETSRNSESNSSNNSGTDQNRPSFENIESAQFTLPSGYGQVTFGIFNEGLDFPMFGTSGPVEETRDGESRREHQSRQRYGARQPRARMSTRRGAGRNEGVPTLEGIIQQLVNGIIAPTAMSNLGVGPWGVLHSNPMDYAWGANGLDTIITQLLNQFENTGPPPADTDKIQALPTIQITEEHVGFGLECPVCKEDYTVGESVRQLPCNHLFHNDCIIPWLEQHDTCPVCRKSLSGQNTATNPPGLTDMTFSSSSTSSSSSTSPTDENNTANNS.

Positions 13, 16, 29, and 32 each coordinate Zn(2+). A C4-type zinc finger spans residues 13-32 (CHSCTAEITPRLPEYTCPRC). 2 disordered regions span residues 41 to 63 (PETS…NRPS) and 96 to 139 (GTSG…RNEG). Low complexity predominate over residues 44-55 (SRNSESNSSNNS). Over residues 102-115 (EETRDGESRREHQS) the composition is skewed to basic and acidic residues. Positions 124–134 (PRARMSTRRGA) are enriched in basic residues. Residues 228–269 (CPVCKEDYTVGESVRQLPCNHLFHNDCIIPWLEQHDTCPVCR) form an RING-type zinc finger. Residues 275-312 (QNTATNPPGLTDMTFSSSSTSSSSSTSPTDENNTANNS) are disordered. Positions 290-301 (SSSSTSSSSSTS) are enriched in low complexity. Residues 302–312 (PTDENNTANNS) show a composition bias toward polar residues.

The protein localises to the cytoplasm. The protein resides in the nucleus. It carries out the reaction S-ubiquitinyl-[E2 ubiquitin-conjugating enzyme]-L-cysteine + [acceptor protein]-L-lysine = [E2 ubiquitin-conjugating enzyme]-L-cysteine + N(6)-ubiquitinyl-[acceptor protein]-L-lysine.. It participates in protein modification; protein ubiquitination. E3 ubiquitin-protein ligase that mediates ubiquitination oF target proteins. Depending on the associated E2 ligase, mediates 'Lys-27'-, 'Lys-29'-, 'Lys-48'- and/or 'Lys-63'-linked polyubiquitination of substrates. Part of a BAG6-dependent quality control process ensuring that proteins of the secretory pathway that are mislocalized to the cytosol are degraded by the proteasome. Probably acts by providing the ubiquitin ligase activity associated with the BAG6 complex and be responsible for ubiquitination of the hydrophobic mislocalized proteins and their targeting to the proteasome. This is E3 ubiquitin-protein ligase RNF126-B from Xenopus laevis (African clawed frog).